Reading from the N-terminus, the 278-residue chain is 4-deoxy-L-threo-5-hexosulose-uronate ketol-isomerase (278 aa).

His-196, His-198, Glu-203, and His-245 together coordinate Zn(2+).

This sequence belongs to the KduI family. Zn(2+) serves as cofactor.

It carries out the reaction 5-dehydro-4-deoxy-D-glucuronate = 3-deoxy-D-glycero-2,5-hexodiulosonate. It functions in the pathway glycan metabolism; pectin degradation; 2-dehydro-3-deoxy-D-gluconate from pectin: step 4/5. In terms of biological role, catalyzes the isomerization of 5-dehydro-4-deoxy-D-glucuronate to 3-deoxy-D-glycero-2,5-hexodiulosonate. The chain is 4-deoxy-L-threo-5-hexosulose-uronate ketol-isomerase from Salmonella paratyphi A (strain ATCC 9150 / SARB42).